The sequence spans 111 residues: Ferredoxin-thioredoxin reductase, catalytic chain (111 aa).

Cys52 lines the [4Fe-4S] cluster pocket. Cys54 serves as the catalytic Nucleophile. A disulfide bond links Cys54 and Cys84. Residues Cys71, Cys73, and Cys82 each contribute to the [4Fe-4S] cluster site.

It belongs to the ferredoxin thioredoxin reductase beta subunit family. As to quaternary structure, heterodimer of subunit A (variable subunit) and subunit B (catalytic subunit). Heterodimeric FTR forms a complex with ferredoxin and thioredoxin. [4Fe-4S] cluster serves as cofactor.

The protein resides in the plastid. It is found in the chloroplast. The catalysed reaction is [thioredoxin]-disulfide + 2 reduced [2Fe-2S]-[ferredoxin] + 2 H(+) = [thioredoxin]-dithiol + 2 oxidized [2Fe-2S]-[ferredoxin]. In terms of biological role, catalytic subunit of the ferredoxin-thioredoxin reductase (FTR), which catalyzes the two-electron reduction of thioredoxins by the electrons provided by reduced ferredoxin. This Cyanidium caldarium (Red alga) protein is Ferredoxin-thioredoxin reductase, catalytic chain (ftrB).